Reading from the N-terminus, the 245-residue chain is Pyridoxine 5'-phosphate synthase (245 aa).

A 3-amino-2-oxopropyl phosphate-binding site is contributed by Asn-7. 1-deoxy-D-xylulose 5-phosphate is bound at residue 9-10; it reads DH. Position 18 (Arg-18) interacts with 3-amino-2-oxopropyl phosphate. Residue His-43 is the Proton acceptor of the active site. Positions 45 and 50 each coordinate 1-deoxy-D-xylulose 5-phosphate. Glu-70 functions as the Proton acceptor in the catalytic mechanism. A 1-deoxy-D-xylulose 5-phosphate-binding site is contributed by Thr-100. The active-site Proton donor is His-190. Residues Gly-191 and 212–213 each bind 3-amino-2-oxopropyl phosphate; that span reads GH.

This sequence belongs to the PNP synthase family. Homooctamer; tetramer of dimers.

Its subcellular location is the cytoplasm. It catalyses the reaction 3-amino-2-oxopropyl phosphate + 1-deoxy-D-xylulose 5-phosphate = pyridoxine 5'-phosphate + phosphate + 2 H2O + H(+). It participates in cofactor biosynthesis; pyridoxine 5'-phosphate biosynthesis; pyridoxine 5'-phosphate from D-erythrose 4-phosphate: step 5/5. Functionally, catalyzes the complicated ring closure reaction between the two acyclic compounds 1-deoxy-D-xylulose-5-phosphate (DXP) and 3-amino-2-oxopropyl phosphate (1-amino-acetone-3-phosphate or AAP) to form pyridoxine 5'-phosphate (PNP) and inorganic phosphate. In Prochlorococcus marinus (strain MIT 9303), this protein is Pyridoxine 5'-phosphate synthase.